Here is a 453-residue protein sequence, read N- to C-terminus: DNA repair protein RadA (453 aa).

Residues 10 to 27 (CQECGYQSPKYLGRCPNC) form a C4-type zinc finger. Position 95-102 (95-102 (GDPGIGKS)) interacts with ATP. The short motif at 251 to 255 (KNRFG) is the RadA KNRFG motif element. The lon-protease-like stretch occupies residues 350–453 (DAYLKSAGGV…VGQVLNAVFS (104 aa)).

This sequence belongs to the RecA family. RadA subfamily.

In terms of biological role, DNA-dependent ATPase involved in processing of recombination intermediates, plays a role in repairing DNA breaks. Stimulates the branch migration of RecA-mediated strand transfer reactions, allowing the 3' invading strand to extend heteroduplex DNA faster. Binds ssDNA in the presence of ADP but not other nucleotides, has ATPase activity that is stimulated by ssDNA and various branched DNA structures, but inhibited by SSB. Does not have RecA's homology-searching function. This chain is DNA repair protein RadA, found in Streptococcus pyogenes serotype M1.